The following is a 421-amino-acid chain: Solute carrier family 35 member F3 (421 aa).

The interval glutamate 25–arginine 53 is disordered. Residues alanine 37–glycine 49 show a composition bias toward low complexity. The next 10 membrane-spanning stretches (helical) occupy residues valine 66 to leucine 86, phenylalanine 98 to glycine 118, valine 149 to leucine 169, aspartate 179 to leucine 199, isoleucine 208 to histidine 228, valine 232 to phenylalanine 252, leucine 266 to leucine 286, leucine 305 to valine 325, threonine 326 to aspartate 346, and isoleucine 352 to leucine 372. The tract at residues lysine 394 to arginine 421 is disordered. Residues arginine 411–arginine 421 are compositionally biased toward basic residues.

It belongs to the SLC35F solute transporter family.

The protein localises to the membrane. It carries out the reaction thiamine(in) = thiamine(out). Its function is as follows. Mediates thiamine transport. This Mus musculus (Mouse) protein is Solute carrier family 35 member F3 (Slc35f3).